The following is a 554-amino-acid chain: Carboxypeptidase Y homolog A (554 aa).

An N-terminal signal peptide occupies residues 1-17 (MRVAASTVLLGVASAAS). Residues 18–137 (FQQQTQHVLS…KLADFNLRVK (120 aa)) constitute a propeptide that is removed on maturation. Cystine bridges form between cysteine 191-cysteine 431, cysteine 325-cysteine 339, cysteine 349-cysteine 372, cysteine 356-cysteine 365, and cysteine 394-cysteine 401. Asparagine 222 carries an N-linked (GlcNAc...) asparagine glycan. Residue serine 278 is part of the active site. Aspartate 470 is a catalytic residue. Asparagine 518 carries N-linked (GlcNAc...) asparagine glycosylation. Histidine 529 is a catalytic residue.

This sequence belongs to the peptidase S10 family.

It localises to the vacuole. The enzyme catalyses Release of a C-terminal amino acid with broad specificity.. Vacuolar carboxypeptidase involved in degradation of small peptides. Digests preferentially peptides containing an aliphatic or hydrophobic residue in P1' position, as well as methionine, leucine or phenylalanine in P1 position of ester substrate. This Podospora anserina (strain S / ATCC MYA-4624 / DSM 980 / FGSC 10383) (Pleurage anserina) protein is Carboxypeptidase Y homolog A (CPYA).